A 104-amino-acid chain; its full sequence is COX assembly mitochondrial protein 1 (104 aa).

The 43-residue stretch at 10–52 (QKQCADLIRALEECHKSFGKFFGECNTIKYELKACLTKDRNDK) folds into the CHCH domain. 2 short sequence motifs (cx9C motif) span residues 13 to 23 (CADLIRALEEC) and 34 to 44 (CNTIKYELKAC). Disulfide bonds link cysteine 13–cysteine 44 and cysteine 23–cysteine 34.

This sequence belongs to the CMC family.

The protein localises to the mitochondrion inner membrane. In terms of biological role, required for mitochondrial cytochrome c oxidase (COX) assembly and respiration. This is COX assembly mitochondrial protein 1 (cmc1) from Schizosaccharomyces pombe (strain 972 / ATCC 24843) (Fission yeast).